Reading from the N-terminus, the 422-residue chain is Glutamate-1-semialdehyde 2,1-aminomutase (422 aa).

The residue at position 264 (K264) is an N6-(pyridoxal phosphate)lysine.

This sequence belongs to the class-III pyridoxal-phosphate-dependent aminotransferase family. HemL subfamily. As to quaternary structure, homodimer. Pyridoxal 5'-phosphate is required as a cofactor.

Its subcellular location is the cytoplasm. The catalysed reaction is (S)-4-amino-5-oxopentanoate = 5-aminolevulinate. It functions in the pathway porphyrin-containing compound metabolism; protoporphyrin-IX biosynthesis; 5-aminolevulinate from L-glutamyl-tRNA(Glu): step 2/2. The sequence is that of Glutamate-1-semialdehyde 2,1-aminomutase from Clostridium tetani (strain Massachusetts / E88).